The chain runs to 275 residues: Exosome complex component Rrp42 (275 aa).

The protein belongs to the RNase PH family. Rrp42 subfamily. In terms of assembly, component of the archaeal exosome complex. Forms a hexameric ring-like arrangement composed of 3 Rrp41-Rrp42 heterodimers. The hexameric ring associates with a trimer of Rrp4 and/or Csl4 subunits.

It is found in the cytoplasm. Its function is as follows. Non-catalytic component of the exosome, which is a complex involved in RNA degradation. Contributes to the structuring of the Rrp41 active site. The polypeptide is Exosome complex component Rrp42 (Saccharolobus islandicus (strain M.16.27) (Sulfolobus islandicus)).